The primary structure comprises 332 residues: Clavesin-1 (332 aa).

Positions 96 to 257 (IKRALMDGFP…EFGGTLPPYD (162 aa)) constitute a CRAL-TRIO domain. The segment at 300–332 (KYMKRSHSVVEPGTLRHEEERENENTQPLLALD) is disordered. The span at 313–323 (TLRHEEERENE) shows a compositional bias: basic and acidic residues.

The protein resides in the golgi apparatus. The protein localises to the trans-Golgi network membrane. Its subcellular location is the early endosome membrane. It localises to the cytoplasmic vesicle. It is found in the clathrin-coated vesicle. In terms of biological role, required for normal morphology of late endosomes and/or lysosomes in neurons. Binds phosphatidylinositol 3,5-bisphosphate (PtdIns(3,5)P2). The chain is Clavesin-1 (clvs1) from Xenopus laevis (African clawed frog).